A 299-amino-acid chain; its full sequence is MRDRLNEFQSRVTDRFDEVELSPARPPSAAEYVDRRFEEVRNAIASVRGEIEKLRRDQQHVLALTIADPRDKNILENQIGTIRRRTGDLRKLVRQAEDDFLEFTKQVQSVTEKRMRQNQLELLKDNLNKLINLFNETHQDYKSRVSVRVRRQLQTVGQDLTDEDINRIMENSGSEQLFFREVNPLSVSGQAAYEDVKKRHGEIKDLENNIAMLEEIFLDLQHLTEAQDEMVTNIDNNVENGLEQVKQGSANVKTAVEYKKSAMRKKICVAAILITILLILIIVAIILAVVLSRGNNNNK.

At 1-270 the chain is on the cytoplasmic side; sequence MRDRLNEFQS…SAMRKKICVA (270 aa). Positions 112-146 form a coiled coil; it reads EKRMRQNQLELLKDNLNKLINLFNETHQDYKSRVS. Positions 193 to 255 constitute a t-SNARE coiled-coil homology domain; sequence YEDVKKRHGE…KQGSANVKTA (63 aa). The helical; Anchor for type IV membrane protein transmembrane segment at 271 to 291 threads the bilayer; it reads AILITILLILIIVAIILAVVL. Residues 292 to 299 are Extracellular-facing; that stretch reads SRGNNNNK.

The protein belongs to the syntaxin family.

The protein localises to the membrane. Its function is as follows. Potentially involved in docking of synaptic vesicles at presynaptic active zones. The protein is Putative syntaxin-2 (syx-2) of Caenorhabditis elegans.